A 74-amino-acid chain; its full sequence is U3-agatoxin-Ao1d (74 aa).

A signal peptide spans 1–20 (MKAAISLLLLSALLFVVIEA). Positions 21–34 (ITYEEGKELFQGER) are excised as a propeptide. 4 cysteine pairs are disulfide-bonded: Cys-37/Cys-53, Cys-44/Cys-58, Cys-52/Cys-68, and Cys-60/Cys-66. Ser-72 is modified (serine amide).

Belongs to the neurotoxin 07 (Beta/delta-agtx) family. 02 (aga-3) subfamily. Expressed by the venom gland.

Its subcellular location is the secreted. In terms of biological role, insecticidal neurotoxin that induces an irreversible spastic paralysis when injected into insects. Modifies presynaptic voltage-gated sodium channels (Nav), causing them to open at the normal resting potential of the nerve. This leads to spontaneous release of neurotransmitter and repetitive action potentials in motor neurons. The polypeptide is U3-agatoxin-Ao1d (Agelena orientalis (Funnel-web spider)).